We begin with the raw amino-acid sequence, 364 residues long: Transcription factor TGA4 (364 aa).

The tract at residues 39-79 (PGSIIIPTNEKPDSLSEDTSHGTEGTPHKFDQEASTSRHPD) is disordered. The span at 48-79 (EKPDSLSEDTSHGTEGTPHKFDQEASTSRHPD) shows a compositional bias: basic and acidic residues. Residues 78–141 (PDKIQRRLAQ…NGVDTNALSF (64 aa)) enclose the bZIP domain. 2 coiled-coil regions span residues 79-127 (DKIQ…RQQG) and 257-277 (NLRQSCQQAEDALSQGMEKLQ). Positions 80–100 (KIQRRLAQNREAARKSRLRKK) are basic motif. Residues 106–120 (LETSRLKLIHLEQEL) form a leucine-zipper region. In terms of domain architecture, DOG1 spans 149-359 (IVAFEMEYGH…RALSSSWAAR (211 aa)). C256 and C262 are oxidised to a cystine.

The protein belongs to the bZIP family. In terms of assembly, binds DNA as a dimer. Interaction with the Dof domain proteins OBP1, OBP2 or OBP3 enhances the binding to the ocs element. Interacts with RAP2-3/EPB, an ethylene-responsive element binding protein. The reduced form interacts with NPR1. In terms of tissue distribution, predominantly expressed in roots.

The protein resides in the nucleus. In terms of biological role, transcriptional activator that binds specifically to the DNA sequence 5'-TGACG-3'. Recognizes ocs elements like the as-1 motif of the cauliflower mosaic virus 35S promoter. Binding to the as-1-like cis elements mediate auxin- and salicylic acid-inducible transcription. May be involved in the induction of the systemic acquired resistance (SAR) via its interaction with NPR1. Could also bind to the Hex-motif (5'-TGACGTGG-3') another cis-acting element found in plant histone promoters. The polypeptide is Transcription factor TGA4 (TGA4) (Arabidopsis thaliana (Mouse-ear cress)).